The following is a 312-amino-acid chain: uncharacterized protein (312 aa).

10 consecutive transmembrane segments (helical) span residues 11–31 (IAAI…KIAL), 46–66 (IAFA…SIRV), 72–92 (ILPL…FGLV), 98–118 (EAGI…AYVL), 128–148 (GFTV…GVDV), 155–171 (GSLL…MYNT), 183–203 (TELT…IALV), 221–241 (PGFV…TSFL), 254–274 (MSAF…VILN), and 277–297 (LAWY…GSNI). 2 EamA domains span residues 18–142 (FIIG…FIFV) and 164–297 (LSSA…GSNI).

The protein belongs to the EamA transporter family.

It localises to the cell membrane. This is an uncharacterized protein from Bacillus subtilis (strain 168).